A 467-amino-acid polypeptide reads, in one-letter code: Ribulose bisphosphate carboxylase large chain (467 aa).

Residue lysine 5 is modified to N6,N6,N6-trimethyllysine. Substrate-binding residues include asparagine 114 and threonine 164. Catalysis depends on lysine 166, which acts as the Proton acceptor. Residue lysine 168 participates in substrate binding. Positions 192, 194, and 195 each coordinate Mg(2+). N6-carboxylysine is present on lysine 192. Residue histidine 285 is the Proton acceptor of the active site. The substrate site is built by arginine 286, histidine 318, and serine 370.

It belongs to the RuBisCO large chain family. Type I subfamily. As to quaternary structure, heterohexadecamer of 8 large chains and 8 small chains; disulfide-linked. The disulfide link is formed within the large subunit homodimers. Mg(2+) serves as cofactor. Post-translationally, the disulfide bond which can form in the large chain dimeric partners within the hexadecamer appears to be associated with oxidative stress and protein turnover.

It localises to the plastid. The protein localises to the chloroplast. The enzyme catalyses 2 (2R)-3-phosphoglycerate + 2 H(+) = D-ribulose 1,5-bisphosphate + CO2 + H2O. The catalysed reaction is D-ribulose 1,5-bisphosphate + O2 = 2-phosphoglycolate + (2R)-3-phosphoglycerate + 2 H(+). Its function is as follows. RuBisCO catalyzes two reactions: the carboxylation of D-ribulose 1,5-bisphosphate, the primary event in carbon dioxide fixation, as well as the oxidative fragmentation of the pentose substrate in the photorespiration process. Both reactions occur simultaneously and in competition at the same active site. In Scutellaria bolanderi (Sierra skullcap), this protein is Ribulose bisphosphate carboxylase large chain.